Here is a 762-residue protein sequence, read N- to C-terminus: uncharacterized protein (762 aa).

The segment at 734–762 is disordered; that stretch reads QQRPRVAAAAPPPPPQPPAAAVPTTQAST. The segment covering 743–753 has biased composition (pro residues); that stretch reads APPPPPQPPAA.

This is an uncharacterized protein from Ostreid herpesvirus 1 (isolate France) (OsHV-1).